A 181-amino-acid chain; its full sequence is Adenine phosphoribosyltransferase (181 aa).

It belongs to the purine/pyrimidine phosphoribosyltransferase family. In terms of assembly, homodimer.

It is found in the cytoplasm. It catalyses the reaction AMP + diphosphate = 5-phospho-alpha-D-ribose 1-diphosphate + adenine. It participates in purine metabolism; AMP biosynthesis via salvage pathway; AMP from adenine: step 1/1. In terms of biological role, catalyzes a salvage reaction resulting in the formation of AMP, that is energically less costly than de novo synthesis. This is Adenine phosphoribosyltransferase from Vibrio atlanticus (strain LGP32) (Vibrio splendidus (strain Mel32)).